The following is a 668-amino-acid chain: tRNA 5-methylaminomethyl-2-thiouridine biosynthesis bifunctional protein MnmC (668 aa).

The tract at residues 1–245 (MKHYSIQPAN…KREMLCGVME (245 aa)) is tRNA (mnm(5)s(2)U34)-methyltransferase. An FAD-dependent cmnm(5)s(2)U34 oxidoreductase region spans residues 270 to 668 (IGGGIACALL…LLKGKAVKAG (399 aa)).

It in the N-terminal section; belongs to the methyltransferase superfamily. tRNA (mnm(5)s(2)U34)-methyltransferase family. The protein in the C-terminal section; belongs to the DAO family. FAD serves as cofactor.

The protein localises to the cytoplasm. It catalyses the reaction 5-aminomethyl-2-thiouridine(34) in tRNA + S-adenosyl-L-methionine = 5-methylaminomethyl-2-thiouridine(34) in tRNA + S-adenosyl-L-homocysteine + H(+). In terms of biological role, catalyzes the last two steps in the biosynthesis of 5-methylaminomethyl-2-thiouridine (mnm(5)s(2)U) at the wobble position (U34) in tRNA. Catalyzes the FAD-dependent demodification of cmnm(5)s(2)U34 to nm(5)s(2)U34, followed by the transfer of a methyl group from S-adenosyl-L-methionine to nm(5)s(2)U34, to form mnm(5)s(2)U34. This is tRNA 5-methylaminomethyl-2-thiouridine biosynthesis bifunctional protein MnmC from Shigella boydii serotype 4 (strain Sb227).